Here is a 252-residue protein sequence, read N- to C-terminus: Flagellar brake protein YcgR (252 aa).

The PilZ domain occupies 123–238 (QRREFYRVPT…TLATVQKYIT (116 aa)).

It belongs to the YcgR family. In terms of assembly, monomer. Interacts with the flagellar basal bodies.

The protein resides in the bacterial flagellum basal body. Its function is as follows. Acts as a flagellar brake, regulating swimming and swarming in a bis-(3'-5') cyclic diguanylic acid (c-di-GMP)-dependent manner. Binds 1 c-di-GMP dimer per subunit. Increasing levels of c-di-GMP lead to decreased motility. This chain is Flagellar brake protein YcgR, found in Janthinobacterium sp. (strain Marseille) (Minibacterium massiliensis).